A 497-amino-acid chain; its full sequence is Probable cytosol aminopeptidase (497 aa).

Residues lysine 263 and aspartate 268 each contribute to the Mn(2+) site. Residue lysine 275 is part of the active site. 3 residues coordinate Mn(2+): aspartate 286, aspartate 345, and glutamate 347. Arginine 349 is an active-site residue.

This sequence belongs to the peptidase M17 family. It depends on Mn(2+) as a cofactor.

It is found in the cytoplasm. The enzyme catalyses Release of an N-terminal amino acid, Xaa-|-Yaa-, in which Xaa is preferably Leu, but may be other amino acids including Pro although not Arg or Lys, and Yaa may be Pro. Amino acid amides and methyl esters are also readily hydrolyzed, but rates on arylamides are exceedingly low.. The catalysed reaction is Release of an N-terminal amino acid, preferentially leucine, but not glutamic or aspartic acids.. In terms of biological role, presumably involved in the processing and regular turnover of intracellular proteins. Catalyzes the removal of unsubstituted N-terminal amino acids from various peptides. The protein is Probable cytosol aminopeptidase of Brucella ovis (strain ATCC 25840 / 63/290 / NCTC 10512).